A 399-amino-acid chain; its full sequence is Maltose excess protein 1-like, chloroplastic (399 aa).

Residues 1–67 (MSSSVSSVRL…RRRRYALPPV (67 aa)) constitute a chloroplast transit peptide. 9 helical membrane-spanning segments follow: residues 93 to 113 (FAGA…ILNA), 123 to 143 (ALFA…LSLL), 154 to 174 (AVIV…QLAM), 180 to 202 (LPQF…LNYF), 217 to 237 (ITIG…VPFI), 238 to 258 (PNSL…VVMA), 268 to 288 (INFV…WMPV), 306 to 326 (AFTM…AVFI), and 361 to 381 (FLAT…RDTI).

It is found in the plastid. Its subcellular location is the chloroplast inner membrane. In terms of biological role, probable maltose transporter. Essential for the conversion of starch to sucrose in leaves at night, probably via the export of maltose from the chloroplast. This is Maltose excess protein 1-like, chloroplastic from Oryza sativa subsp. japonica (Rice).